The primary structure comprises 429 residues: Serine--tRNA ligase (429 aa).

T236 to E238 contributes to the L-serine binding site. R267–E269 is an ATP binding site. Residue E290 participates in L-serine binding. An ATP-binding site is contributed by E354–S357. An L-serine-binding site is contributed by S390.

It belongs to the class-II aminoacyl-tRNA synthetase family. Type-1 seryl-tRNA synthetase subfamily. As to quaternary structure, homodimer. The tRNA molecule binds across the dimer.

The protein localises to the cytoplasm. The catalysed reaction is tRNA(Ser) + L-serine + ATP = L-seryl-tRNA(Ser) + AMP + diphosphate + H(+). It carries out the reaction tRNA(Sec) + L-serine + ATP = L-seryl-tRNA(Sec) + AMP + diphosphate + H(+). The protein operates within aminoacyl-tRNA biosynthesis; selenocysteinyl-tRNA(Sec) biosynthesis; L-seryl-tRNA(Sec) from L-serine and tRNA(Sec): step 1/1. In terms of biological role, catalyzes the attachment of serine to tRNA(Ser). Is also able to aminoacylate tRNA(Sec) with serine, to form the misacylated tRNA L-seryl-tRNA(Sec), which will be further converted into selenocysteinyl-tRNA(Sec). The polypeptide is Serine--tRNA ligase (Wigglesworthia glossinidia brevipalpis).